Here is a 158-residue protein sequence, read N- to C-terminus: Transcription elongation factor GreA (158 aa).

Belongs to the GreA/GreB family.

Its function is as follows. Necessary for efficient RNA polymerase transcription elongation past template-encoded arresting sites. The arresting sites in DNA have the property of trapping a certain fraction of elongating RNA polymerases that pass through, resulting in locked ternary complexes. Cleavage of the nascent transcript by cleavage factors such as GreA or GreB allows the resumption of elongation from the new 3'terminus. GreA releases sequences of 2 to 3 nucleotides. The polypeptide is Transcription elongation factor GreA (Rhizobium etli (strain ATCC 51251 / DSM 11541 / JCM 21823 / NBRC 15573 / CFN 42)).